A 634-amino-acid chain; its full sequence is Threonine--tRNA ligase (634 aa).

Residues Met-1–Thr-61 enclose the TGS domain. The catalytic stretch occupies residues Asp-241–Pro-532. Zn(2+) is bound by residues Cys-332, His-383, and His-509.

Belongs to the class-II aminoacyl-tRNA synthetase family. As to quaternary structure, homodimer. The cofactor is Zn(2+).

Its subcellular location is the cytoplasm. It carries out the reaction tRNA(Thr) + L-threonine + ATP = L-threonyl-tRNA(Thr) + AMP + diphosphate + H(+). Its function is as follows. Catalyzes the attachment of threonine to tRNA(Thr) in a two-step reaction: L-threonine is first activated by ATP to form Thr-AMP and then transferred to the acceptor end of tRNA(Thr). Also edits incorrectly charged L-seryl-tRNA(Thr). The protein is Threonine--tRNA ligase of Francisella tularensis subsp. tularensis (strain FSC 198).